The chain runs to 508 residues: Probable glycine dehydrogenase (decarboxylating) subunit 2 (508 aa).

Lys-277 is modified (N6-(pyridoxal phosphate)lysine).

This sequence belongs to the GcvP family. C-terminal subunit subfamily. The glycine cleavage system is composed of four proteins: P, T, L and H. In this organism, the P 'protein' is a heterodimer of two subunits. Pyridoxal 5'-phosphate is required as a cofactor.

The catalysed reaction is N(6)-[(R)-lipoyl]-L-lysyl-[glycine-cleavage complex H protein] + glycine + H(+) = N(6)-[(R)-S(8)-aminomethyldihydrolipoyl]-L-lysyl-[glycine-cleavage complex H protein] + CO2. Its function is as follows. The glycine cleavage system catalyzes the degradation of glycine. The P protein binds the alpha-amino group of glycine through its pyridoxal phosphate cofactor; CO(2) is released and the remaining methylamine moiety is then transferred to the lipoamide cofactor of the H protein. The polypeptide is Probable glycine dehydrogenase (decarboxylating) subunit 2 (Saccharolobus solfataricus (strain ATCC 35092 / DSM 1617 / JCM 11322 / P2) (Sulfolobus solfataricus)).